A 591-amino-acid polypeptide reads, in one-letter code: NADPH oxidase 1 (591 aa).

Residues 1–36 (MAGELRGSRGPLQRIQIAPREAPNLHLTMGNWLVNH) lie on the Cytoplasmic side of the membrane. Residues 37–59 (WLSVLFLVSWLGLNIFLFVYAFL) traverse the membrane as a helical segment. Over 60–72 (NYEKSDKYYYTRE) the chain is Extracellular. Residues 73–97 (ILGTALALARASALCLNFNSMMILI) traverse the membrane as a helical segment. One can recognise a Ferric oxidoreductase domain in the interval 82–316 (RASALCLNFN…YIFERILRFY (235 aa)). Residues 98-130 (PVCRNLLSFLRGTCSFCNRTLRKPLDHNLTFHK) are Cytoplasmic-facing. Heme contacts are provided by H129 and H143. Residues 131–151 (LVAYMICIFTVIHIIAHLFNF) traverse the membrane as a helical segment. Topologically, residues 152-195 (ERYRRSQQAMDGSLASVLSSLSHPEKEDSWLNPIQSPNMTVMYA) are extracellular. N189 carries N-linked (GlcNAc...) asparagine glycosylation. Residues 196 to 216 (AFTSIAGLTGVIATVALVLMV) form a helical membrane-spanning segment. Over 217 to 234 (TSAMEFIRRNYFELFWYT) the chain is Cytoplasmic. The helical transmembrane segment at 235-255 (HHLFIVYIICLGIHGLGGIVR) threads the bilayer. Heme is bound by residues H236 and H248. Topologically, residues 256-423 (GQTEESLGES…TVSEDVFQYE (168 aa)) are extracellular. N-linked (GlcNAc...) asparagine glycosylation occurs at N269. The FAD-binding FR-type domain maps to 317-418 (RSQQKVVITK…DGPFGTVSED (102 aa)). 365 to 371 (HPFTLTS) serves as a coordination point for FAD. A helical transmembrane segment spans residues 424–444 (VAVLVGAGIGVTPFASILKSI). Positions 424–563 (VAVLVGAGIG…GVFLCGPRTL (140 aa)) are interaction with NOXO1. Over 445-591 (WYKFQRADNK…VQFYFNKETF (147 aa)) the chain is Cytoplasmic. At T457 the chain carries Phosphothreonine.

NOX1, NOXA1, NOXO1, RAC1 and CYBA forms a functional multimeric complex supporting ROS production. Interacts with NOXO1. Interacts (via FAD-binding FR-type domain) with ARHGEF7 (via PH domain). Interacts with NOXA1. Requires FAD as cofactor. In terms of processing, phosphorylation at Thr-457 mediated by PKC/PRKBC positively regulates its interaction with NOXA1 and enzyme activity. Expressed in colon and vascular smooth muscle cells (VSMC).

It is found in the cell projection. The protein resides in the invadopodium membrane. The protein localises to the cell membrane. The enzyme catalyses NADPH + 2 O2 = 2 superoxide + NADP(+) + H(+). The oxidase activity is potentiated by NOXA1 and NOXO1. Functionally, NADPH oxidase that catalyzes the generation of superoxide from molecular oxygen utilizing NADPH as an electron donor. The sequence is that of NADPH oxidase 1 (Nox1) from Mus musculus (Mouse).